Here is a 129-residue protein sequence, read N- to C-terminus: Glycine cleavage system H protein (129 aa).

A Lipoyl-binding domain is found at 24–106; the sequence is LLKIGVSEFA…IGEGWLVILK (83 aa). Lys-65 is subject to N6-lipoyllysine.

The protein belongs to the GcvH family. As to quaternary structure, the glycine cleavage system is composed of four proteins: P, T, L and H. (R)-lipoate is required as a cofactor.

Functionally, the glycine cleavage system catalyzes the degradation of glycine. The H protein shuttles the methylamine group of glycine from the P protein to the T protein. This is Glycine cleavage system H protein from Prochlorococcus marinus (strain MIT 9312).